The following is a 282-amino-acid chain: Putative sugar uptake protein lp_2594 (282 aa).

Transmembrane regions (helical) follow at residues 2 to 21 (IFLIAIIPALCWGINPLLVG), 31 to 48 (MFGMGIGDGLIALIFWLF), 53 to 75 (VTISGVTFGLAMISGAAWAIGQL), 90 to 112 (MPISTALQLVGTSLIGVLMFGEW), 119 to 136 (ILGLLAIMLIVAGSALSA), 146 to 163 (FSCYLPLLMTTIGYWIYS), 176 to 194 (LFLPQMLGILIVAVGWAIY), 209 to 226 (TLPGILYGIAAFMYILSA), 233 to 252 (NAYIIGQLSVVISTLSGLFF), and 262 to 281 (IVSVATGLLFIFMGCVTTAL).

Belongs to the GRP transporter (TC 2.A.7.5) family.

It is found in the cell membrane. The chain is Putative sugar uptake protein lp_2594 from Lactiplantibacillus plantarum (strain ATCC BAA-793 / NCIMB 8826 / WCFS1) (Lactobacillus plantarum).